We begin with the raw amino-acid sequence, 517 residues long: General transcription factor IIF subunit 1 (517 aa).

Ala2 carries the N-acetylalanine modification. Position 156 is a phosphothreonine (Thr156). The tract at residues 178–466 is disordered; the sequence is QQRRLKDQDQ…DAVRRYLTRK (289 aa). Ser217, Ser218, Ser221, and Ser224 each carry phosphoserine. Basic residues predominate over residues 232–251; sequence PKAKKKAPLAKGGRKKKKKK. Composition is skewed to acidic residues over residues 255 to 270 and 303 to 325; these read DEAF…EGQE and EQSD…EEEE. Thr331 is modified (phosphothreonine). The span at 343 to 355 shows a compositional bias: acidic residues; it reads EESDSSEESDIDS. Residues 364-374 show a composition bias toward basic residues; it reads AKKKTPPKRER. 4 positions are modified to phosphoserine: Ser377, Ser380, Ser381, and Ser385. Residues 377–391 show a composition bias toward low complexity; that stretch reads SGGSSRGNSRPGTPS. Residue Thr389 is modified to Phosphothreonine. Position 391 is a phosphoserine (Ser391). At Lys407 the chain carries N6-acetyllysine. The span at 428-452 shows a compositional bias: polar residues; that stretch reads GPQSLSGKSTPQPPSGKTTPNSGDV. Phosphoserine is present on residues Ser431, Ser433, and Ser436. Phosphothreonine is present on residues Thr437 and Thr446. Ser449 bears the Phosphoserine mark. Zn(2+) contacts are provided by Glu503, His512, and Glu517.

The protein belongs to the TFIIF alpha subunit family. In terms of assembly, heterodimer of an alpha and a beta subunit. Interacts with GTF2F2, CTDP1, TAF6/TAFII80 and URI1. Interacts with GTF2B (via C-terminus and preferentially via acetylated form); this interaction prevents binding of GTF2B to GTF2F2. Part of TBP-based Pol II pre-initiation complex (PIC), in which Pol II core assembles with general transcription factors and other specific initiation factors including GTF2E1, GTF2E2, GTF2F1, GTF2F2, TCEA1, ERCC2, ERCC3, GTF2H2, GTF2H3, GTF2H4, GTF2H5, GTF2A1, GTF2A2, GTF2B and TBP; this large multi-subunit PIC complex mediates DNA unwinding and targets Pol II core to the transcription start site where the first phosphodiester bond forms. Post-translationally, phosphorylated on Ser and other residues by TAF1 and casein kinase II-like kinases.

The protein resides in the nucleus. Functionally, TFIIF is a general transcription initiation factor that binds to RNA polymerase II and helps to recruit it to the initiation complex in collaboration with TFIIB. It promotes transcription elongation. This Homo sapiens (Human) protein is General transcription factor IIF subunit 1 (GTF2F1).